A 22-amino-acid polypeptide reads, in one-letter code: Peptide PGLa-B1 (22 aa).

Position 22 is a leucine amide (Leu22).

In terms of tissue distribution, expressed by the skin glands.

The protein localises to the secreted. Functionally, has antibacterial and antifungal activity. This chain is Peptide PGLa-B1, found in Xenopus borealis (Kenyan clawed frog).